The following is a 390-amino-acid chain: ATP-sensitive inward rectifier potassium channel 11 (390 aa).

Topologically, residues 1–65 (MLSRKGIIPE…LQDVFTTLVD (65 aa)) are cytoplasmic. ATP is bound by residues Asn-48 and Arg-50. A helical membrane pass occupies residues 66 to 92 (LKWPHTLLIFTMSFLCSWLLFAMVWWL). Over 93 to 116 (IAFAHGDLAPGEGTNVPCVTSIHS) the chain is Extracellular. Cys-110 and Cys-142 are joined by a disulfide. Residues 117 to 133 (FSSAFLFSIEVQVTIGF) constitute an intramembrane region (discontinuously helical; Pore-forming). 2 residues coordinate K(+): Thr-130 and Phe-133. Residues 130-135 (TIGFGG) carry the Selectivity filter motif. Residues 134–142 (GGRMVTEEC) are Extracellular-facing. The helical transmembrane segment at 143 to 171 (PLAILILIVQNIVGLMINAIMLGCIFMKT) threads the bilayer. At 172–390 (AQAHRRAETL…KFSISPDSLS (219 aa)) the chain is on the cytoplasmic side. A 1,2-diacyl-sn-glycero-3-phospho-(1D-myo-inositol-4,5-bisphosphate) is bound at residue Arg-176. Tyr-330 is an ATP binding site. Residue Thr-341 is modified to Phosphothreonine; by MAPK1. Phosphoserine; by MAPK1 is present on Ser-385.

Belongs to the inward rectifier-type potassium channel (TC 1.A.2.1) family. KCNJ11 subfamily. As to quaternary structure, homotetramer; the homotetramer binds four ATP molecules (one ATP per subunit). Forms an heterooctamer with ABCC8/SUR1; one KCNJ11 homotetramer interacts with four ABCC8/SUR1 molecules. Interacts with ABCC9/SUR2. In terms of processing, phosphorylation by MAPK1 results in changes in channel gating that destabilize the closed states and reduce the ATP sensitivity.

It localises to the membrane. It carries out the reaction K(+)(in) = K(+)(out). Its activity is regulated as follows. KATP channels are regulated by cytoplasmic ATP/ADP ratios; ATP inhibits the channel by closing the pore, while ADP activates the channel. Activated by phosphatidylinositol 4,5-biphosphate (PtdIns(4,5)P2). Functionally, inward rectifier potassium channel that forms the pore of ATP-sensitive potassium channels (KATP), regulating potassium permeability as a function of cytoplasmic ATP and ADP concentrations in many different cells. Inward rectifier potassium channels are characterized by a greater tendency to allow potassium to flow into the cell rather than out of it. Their voltage dependence is regulated by the concentration of extracellular potassium; as external potassium is raised, the voltage range of the channel opening shifts to more positive voltages. The inward rectification is mainly due to the blockage of outward current by internal magnesium. Can be blocked by extracellular barium. In pancreatic cells, it forms KATP channels with ABCC8/SUR1. Can form cardiac and smooth muscle-type KATP channels with ABCC9. The sequence is that of ATP-sensitive inward rectifier potassium channel 11 (Kcnj11) from Mus musculus (Mouse).